A 287-amino-acid chain; its full sequence is ATP synthase gamma chain (287 aa).

This sequence belongs to the ATPase gamma chain family. F-type ATPases have 2 components, CF(1) - the catalytic core - and CF(0) - the membrane proton channel. CF(1) has five subunits: alpha(3), beta(3), gamma(1), delta(1), epsilon(1). CF(0) has three main subunits: a, b and c.

Its subcellular location is the cell inner membrane. Its function is as follows. Produces ATP from ADP in the presence of a proton gradient across the membrane. The gamma chain is believed to be important in regulating ATPase activity and the flow of protons through the CF(0) complex. This Xylella fastidiosa (strain M23) protein is ATP synthase gamma chain.